The chain runs to 202 residues: Ribonuclease HII (202 aa).

The 190-residue stretch at 12–201 (LLIAGVDEAG…VRQLKLFIPE (190 aa)) folds into the RNase H type-2 domain. A divalent metal cation contacts are provided by Asp-18, Glu-19, and Asp-110.

This sequence belongs to the RNase HII family. Mn(2+) serves as cofactor. Mg(2+) is required as a cofactor.

The protein localises to the cytoplasm. The catalysed reaction is Endonucleolytic cleavage to 5'-phosphomonoester.. In terms of biological role, endonuclease that specifically degrades the RNA of RNA-DNA hybrids. The sequence is that of Ribonuclease HII from Coxiella burnetii (strain CbuG_Q212) (Coxiella burnetii (strain Q212)).